We begin with the raw amino-acid sequence, 144 residues long: D-aminoacyl-tRNA deacylase (144 aa).

The short motif at 136-137 is the Gly-cisPro motif, important for rejection of L-amino acids element; sequence GP.

Belongs to the DTD family. Homodimer.

It localises to the cytoplasm. The enzyme catalyses glycyl-tRNA(Ala) + H2O = tRNA(Ala) + glycine + H(+). It catalyses the reaction a D-aminoacyl-tRNA + H2O = a tRNA + a D-alpha-amino acid + H(+). In terms of biological role, an aminoacyl-tRNA editing enzyme that deacylates mischarged D-aminoacyl-tRNAs. Also deacylates mischarged glycyl-tRNA(Ala), protecting cells against glycine mischarging by AlaRS. Acts via tRNA-based rather than protein-based catalysis; rejects L-amino acids rather than detecting D-amino acids in the active site. By recycling D-aminoacyl-tRNA to D-amino acids and free tRNA molecules, this enzyme counteracts the toxicity associated with the formation of D-aminoacyl-tRNA entities in vivo and helps enforce protein L-homochirality. This Haemophilus ducreyi (strain 35000HP / ATCC 700724) protein is D-aminoacyl-tRNA deacylase.